The primary structure comprises 504 residues: Anaerobic nitric oxide reductase transcription regulator NorR (504 aa).

Asp57 is subject to 4-aspartylphosphate. Positions Met187 to Val416 constitute a Sigma-54 factor interaction domain. ATP contacts are provided by residues Gly215 to Glu222 and Ala278 to Glu287. A DNA-binding region (H-T-H motif) is located at residues Trp479 to Lys498.

Its pathway is nitrogen metabolism; nitric oxide reduction. Its function is as follows. Required for the expression of anaerobic nitric oxide (NO) reductase, acts as a transcriptional activator for at least the norVW operon. Activation also requires sigma-54. The chain is Anaerobic nitric oxide reductase transcription regulator NorR from Escherichia coli (strain SMS-3-5 / SECEC).